The following is a 345-amino-acid chain: Photosystem II protein D1 (345 aa).

The next 3 membrane-spanning stretches (helical) occupy residues 30–47 (YVGWFGVLMIPTLLTAAT), 119–134 (HFFIGICSYMGREWEL), and 143–157 (WIAVAYSAPVAAASA). His-119 provides a ligand contact to chlorophyll a. Tyr-127 contacts pheophytin a. [CaMn4O5] cluster-binding residues include Asp-171 and Glu-190. A helical transmembrane segment spans residues 198 to 219 (FHMLGVAGVFGGSLFSAMHGSL). A chlorophyll a-binding site is contributed by His-199. A quinone-binding positions include His-216 and 265 to 266 (SF). His-216 is a Fe cation binding site. His-273 provides a ligand contact to Fe cation. Residues 275 to 289 (FLAVWPVVGIWFTAL) form a helical membrane-spanning segment. Positions 333, 334, 343, and 345 each coordinate [CaMn4O5] cluster.

Belongs to the reaction center PufL/M/PsbA/D family. As to quaternary structure, PSII is composed of 1 copy each of membrane proteins PsbA, PsbB, PsbC, PsbD, PsbE, PsbF, PsbH, PsbI, PsbJ, PsbK, PsbL, PsbM, PsbT, PsbY, PsbZ, Psb30/Ycf12, at least 3 peripheral proteins of the oxygen-evolving complex and a large number of cofactors. It forms dimeric complexes. The D1/D2 heterodimer binds P680, chlorophylls that are the primary electron donor of PSII, and subsequent electron acceptors. It shares a non-heme iron and each subunit binds pheophytin, quinone, additional chlorophylls, carotenoids and lipids. D1 provides most of the ligands for the Mn4-Ca-O5 cluster of the oxygen-evolving complex (OEC). There is also a Cl(-1) ion associated with D1 and D2, which is required for oxygen evolution. The PSII complex binds additional chlorophylls, carotenoids and specific lipids. is required as a cofactor. Post-translationally, tyr-162 forms a radical intermediate that is referred to as redox-active TyrZ, YZ or Y-Z.

The protein resides in the plastid. It localises to the chloroplast thylakoid membrane. The catalysed reaction is 2 a plastoquinone + 4 hnu + 2 H2O = 2 a plastoquinol + O2. Photosystem II (PSII) is a light-driven water:plastoquinone oxidoreductase that uses light energy to abstract electrons from H(2)O, generating O(2) and a proton gradient subsequently used for ATP formation. It consists of a core antenna complex that captures photons, and an electron transfer chain that converts photonic excitation into a charge separation. The D1/D2 (PsbA/PsbD) reaction center heterodimer binds P680, the primary electron donor of PSII as well as several subsequent electron acceptors. This chain is Photosystem II protein D1, found in Euglena gracilis.